Here is a 98-residue protein sequence, read N- to C-terminus: Large ribosomal subunit protein uL23 (98 aa).

The protein belongs to the universal ribosomal protein uL23 family. Part of the 50S ribosomal subunit. Contacts protein L29, and trigger factor when it is bound to the ribosome.

One of the early assembly proteins it binds 23S rRNA. One of the proteins that surrounds the polypeptide exit tunnel on the outside of the ribosome. Forms the main docking site for trigger factor binding to the ribosome. The sequence is that of Large ribosomal subunit protein uL23 from Methylobacterium sp. (strain 4-46).